Here is a 494-residue protein sequence, read N- to C-terminus: Probable cytosol aminopeptidase (494 aa).

Mn(2+)-binding residues include lysine 260 and aspartate 265. Lysine 272 is a catalytic residue. Residues aspartate 283, aspartate 342, and glutamate 344 each contribute to the Mn(2+) site. Arginine 346 is an active-site residue.

It belongs to the peptidase M17 family. Mn(2+) is required as a cofactor.

The protein localises to the cytoplasm. It carries out the reaction Release of an N-terminal amino acid, Xaa-|-Yaa-, in which Xaa is preferably Leu, but may be other amino acids including Pro although not Arg or Lys, and Yaa may be Pro. Amino acid amides and methyl esters are also readily hydrolyzed, but rates on arylamides are exceedingly low.. The catalysed reaction is Release of an N-terminal amino acid, preferentially leucine, but not glutamic or aspartic acids.. Presumably involved in the processing and regular turnover of intracellular proteins. Catalyzes the removal of unsubstituted N-terminal amino acids from various peptides. The protein is Probable cytosol aminopeptidase of Bacillus thuringiensis (strain Al Hakam).